The following is a 350-amino-acid chain: Histidinol-phosphate aminotransferase (350 aa).

The residue at position 212 (lysine 212) is an N6-(pyridoxal phosphate)lysine.

It belongs to the class-II pyridoxal-phosphate-dependent aminotransferase family. Histidinol-phosphate aminotransferase subfamily. Homodimer. The cofactor is pyridoxal 5'-phosphate.

It carries out the reaction L-histidinol phosphate + 2-oxoglutarate = 3-(imidazol-4-yl)-2-oxopropyl phosphate + L-glutamate. The protein operates within amino-acid biosynthesis; L-histidine biosynthesis; L-histidine from 5-phospho-alpha-D-ribose 1-diphosphate: step 7/9. The chain is Histidinol-phosphate aminotransferase from Geobacter sulfurreducens (strain ATCC 51573 / DSM 12127 / PCA).